The primary structure comprises 149 residues: UPF0178 protein VF_0601 (149 aa).

The protein belongs to the UPF0178 family.

The polypeptide is UPF0178 protein VF_0601 (Aliivibrio fischeri (strain ATCC 700601 / ES114) (Vibrio fischeri)).